The sequence spans 340 residues: Guanine nucleotide-binding protein G(I)/G(S)/G(T) subunit beta-3 (340 aa).

WD repeat units follow at residues 53–83, 95–125, 141–170, 182–212, 224–254, 268–298, and 310–340; these read GHLA…IVWD, LRSS…SIYN, AHTG…ALWD, GHTG…KLWD, GHES…RLFD, SIIC…NVWD, and GHDN…KIWN.

The protein belongs to the WD repeat G protein beta family. As to quaternary structure, g proteins are composed of 3 units, alpha, beta and gamma. Interacts with RASD2.

In terms of biological role, guanine nucleotide-binding proteins (G proteins) are involved as a modulator or transducer in various transmembrane signaling systems. The beta and gamma chains are required for the GTPase activity, for replacement of GDP by GTP, and for G protein-effector interaction. This chain is Guanine nucleotide-binding protein G(I)/G(S)/G(T) subunit beta-3 (Gnb3), found in Mus musculus (Mouse).